A 246-amino-acid polypeptide reads, in one-letter code: uncharacterized protein (246 aa).

This is an uncharacterized protein from Acidianus sp. F28 (AFV-2).